We begin with the raw amino-acid sequence, 140 residues long: uncharacterized protein (140 aa).

Helical transmembrane passes span 42 to 62 (AFLFNFLPLLLLLAFLDIFAS), 65 to 85 (ASFLAAVLIKILVKSVFSALG), and 96 to 116 (RASDCLAALEFFDIFLAMLCF).

Its subcellular location is the membrane. This is an uncharacterized protein from Saccharomyces cerevisiae (strain ATCC 204508 / S288c) (Baker's yeast).